The chain runs to 1172 residues: DNA-directed RNA polymerase subunit beta (1172 aa).

It belongs to the RNA polymerase beta chain family. The RNAP catalytic core consists of 2 alpha, 1 beta, 1 beta' and 1 omega subunit. When a sigma factor is associated with the core the holoenzyme is formed, which can initiate transcription.

The enzyme catalyses RNA(n) + a ribonucleoside 5'-triphosphate = RNA(n+1) + diphosphate. Its function is as follows. DNA-dependent RNA polymerase catalyzes the transcription of DNA into RNA using the four ribonucleoside triphosphates as substrates. In Thermosipho melanesiensis (strain DSM 12029 / CIP 104789 / BI429), this protein is DNA-directed RNA polymerase subunit beta.